The following is a 394-amino-acid chain: Beta-ketothiolase BktB (394 aa).

The Acyl-thioester intermediate role is filled by Cys-90. Catalysis depends on proton acceptor residues His-350 and Cys-380.

Belongs to the thiolase-like superfamily. Thiolase family.

The catalysed reaction is an acyl-CoA + acetyl-CoA = a 3-oxoacyl-CoA + CoA. The enzyme catalyses 2 acetyl-CoA = acetoacetyl-CoA + CoA. Functionally, required for efficient production of poly(beta-hydroxybutyrate-co-beta-hydroxyvalerate) (PHBV). Catalyzes the condensation of acetyl-CoA and propionyl-CoA to form beta-ketovaleryl-CoA, and the condensation of two acetyl-CoA molecules to form acetoacetyl-CoA. This is Beta-ketothiolase BktB (bktB) from Cupriavidus necator (strain ATCC 17699 / DSM 428 / KCTC 22496 / NCIMB 10442 / H16 / Stanier 337) (Ralstonia eutropha).